The primary structure comprises 388 residues: Yellow-related salivary protein SP03 (388 aa).

An N-terminal signal peptide occupies residues 1-18 (MKIFLCLIAVVSLQGVLA). Asparagine 29 is a glycosylation site (N-linked (GlcNAc...) asparagine).

Belongs to the major royal jelly protein family. Female salivary gland (at protein level).

It is found in the secreted. Its function is as follows. Probably modulates blood feeding of sand flies on vertebrate species by binding and sequestering different mediators involved in the host response. Binds biogenic amines. Binds noradrenaline with medium affinity. Binds octopamine with low affinity. Poorly binds histamine, adrenaline and serotonin. The protein is Yellow-related salivary protein SP03 of Phlebotomus perniciosus (Phlebotomine sand fly).